The sequence spans 339 residues: Protein H339R (339 aa).

This sequence belongs to the asfivirus H339R family. As to quaternary structure, interacts with NACA (alpha chain of nascent polypeptide-associated complex).

It localises to the host cytoplasm. The protein resides in the host nucleus. It is found in the virion. The polypeptide is Protein H339R (African swine fever virus (isolate Warthog/Namibia/Wart80/1980) (ASFV)).